Here is a 670-residue protein sequence, read N- to C-terminus: Acetyl-coenzyme A synthetase (670 aa).

CoA is bound by residues 211–214 and Thr329; that span reads RGGK. Residues 404–406, 428–433, Asp519, and Arg534 each bind ATP; these read GEP and DTYWQT. Ser542 contributes to the CoA binding site. Arg545 serves as a coordination point for ATP. Residue Arg603 coordinates CoA.

Belongs to the ATP-dependent AMP-binding enzyme family.

It carries out the reaction acetate + ATP + CoA = acetyl-CoA + AMP + diphosphate. This Emericella nidulans (strain FGSC A4 / ATCC 38163 / CBS 112.46 / NRRL 194 / M139) (Aspergillus nidulans) protein is Acetyl-coenzyme A synthetase (facA).